Here is a 594-residue protein sequence, read N- to C-terminus: Cryptochrome-2 (594 aa).

Residues 21–150 (ASSVHWFRKG…EVVTENSHTL (130 aa)) enclose the Photolyase/cryptochrome alpha/beta domain. K29 participates in a covalent cross-link: Glycyl lysine isopeptide (Lys-Gly) (interchain with G-Cter in ubiquitin). S89 is subject to Phosphoserine. Residues K125 and K241 each participate in a glycyl lysine isopeptide (Lys-Gly) (interchain with G-Cter in ubiquitin) cross-link. Residue S265 is modified to Phosphoserine; by MAPK. Position 270 (S270) interacts with FAD. S298 carries the post-translational modification Phosphoserine. Q307 contributes to the FAD binding site. K347 is covalently cross-linked (Glycyl lysine isopeptide (Lys-Gly) (interchain with G-Cter in ubiquitin)). FAD is bound by residues H373 and 405–407 (DAD). The tract at residues 389 to 488 (WVSWESGVRV…IIGVDYPRPI (100 aa)) is required for inhibition of CLOCK-BMAL1-mediated transcription. Residues K474 and K503 each participate in a glycyl lysine isopeptide (Lys-Gly) (interchain with G-Cter in ubiquitin) cross-link. Residues 532 to 594 (VAEPGSSQAG…PAQEPPSKDS (63 aa)) form a disordered region. Over residues 536-547 (GSSQAGSISNTG) the composition is skewed to polar residues. The residue at position 553 (S553) is a Phosphoserine; by GSK3-beta. S557 is modified (phosphoserine; by DYRK1A and MAPK).

It belongs to the DNA photolyase class-1 family. Component of the circadian core oscillator, which includes the CRY proteins, CLOCK or NPAS2, BMAL1 or BMAL2, CSNK1D and/or CSNK1E, TIMELESS, and the PER proteins. Interacts with TIMELESS. Interacts directly with PER1, PER2 and PER3; interaction with PER2 inhibits its ubiquitination and vice versa. Interacts with CLOCK-BMAL1. Interacts with CLOCK. Interacts with BMAL1. Interacts with NFIL3. Interacts with FBXL3 and FBXL21. FBXL3, PER2 and the cofactor FAD compete for overlapping binding sites. FBXL3 cannot bind CRY2 that interacts already with PER2 or that contains bound FAD. Interacts with PPP5C (via TPR repeats); the interaction down-regulates the PPP5C phosphatase activity on CSNK1E. Interacts with nuclear receptors AR and NR3C1/GR; the interaction is ligand dependent. Interacts with PRKDC and CIART. Interacts with DDB1, USP7 and TARDBP. Interacts with HNF4A and PPARA. Interacts with PPARD (via domain NR LBD) and NR1I2 (via domain NR LBD) in a ligand-dependent manner. Interacts with PPARG, NR1I3 and VDR in a ligand-dependent manner. FAD serves as cofactor. (6R)-5,10-methylene-5,6,7,8-tetrahydrofolate is required as a cofactor. In terms of processing, phosphorylation on Ser-265 by MAPK is important for the inhibition of CLOCK-BMAL1-mediated transcriptional activity. Phosphorylation by CSKNe requires interaction with PER1 or PER2. Phosphorylated in a circadian manner at Ser-553 and Ser-557 in the suprachiasmatic nucleus (SCN) and liver. Phosphorylation at Ser-557 by DYRK1A promotes subsequent phosphorylation at Ser-553 by GSK3-beta: the two-step phosphorylation at the neighboring Ser residues leads to its proteasomal degradation. Ubiquitinated by the SCF(FBXL3) and SCF(FBXL21) complexes, regulating the balance between degradation and stabilization. The SCF(FBXL3) complex is mainly nuclear and mediates ubiquitination and subsequent degradation of CRY2. In contrast, cytoplasmic SCF(FBXL21) complex-mediated ubiquitination leads to stabilize CRY2 and counteract the activity of the SCF(FBXL3) complex. The SCF(FBXL3) and SCF(FBXL21) complexes probably mediate ubiquitination at different Lys residues. The SCF(FBXL3) complex recognizes and binds CRY2 phosphorylated at Ser-553 and Ser-557. Ubiquitination may be inhibited by PER2. Deubiquitinated by USP7. As to expression, expressed in all tissues examined including heart, cerebellum, cerebral cortex, lung, liver, muscle, kidney and ovary. Highest levels in heart, liver and ovary. Highly expressed in the suprachiasmatic nucleus (SCN).

It localises to the cytoplasm. Its subcellular location is the nucleus. Transcriptional repressor which forms a core component of the circadian clock. The circadian clock, an internal time-keeping system, regulates various physiological processes through the generation of approximately 24 hour circadian rhythms in gene expression, which are translated into rhythms in metabolism and behavior. It is derived from the Latin roots 'circa' (about) and 'diem' (day) and acts as an important regulator of a wide array of physiological functions including metabolism, sleep, body temperature, blood pressure, endocrine, immune, cardiovascular, and renal function. Consists of two major components: the central clock, residing in the suprachiasmatic nucleus (SCN) of the brain, and the peripheral clocks that are present in nearly every tissue and organ system. Both the central and peripheral clocks can be reset by environmental cues, also known as Zeitgebers (German for 'timegivers'). The predominant Zeitgeber for the central clock is light, which is sensed by retina and signals directly to the SCN. The central clock entrains the peripheral clocks through neuronal and hormonal signals, body temperature and feeding-related cues, aligning all clocks with the external light/dark cycle. Circadian rhythms allow an organism to achieve temporal homeostasis with its environment at the molecular level by regulating gene expression to create a peak of protein expression once every 24 hours to control when a particular physiological process is most active with respect to the solar day. Transcription and translation of core clock components (CLOCK, NPAS2, BMAL1, BMAL2, PER1, PER2, PER3, CRY1 and CRY2) plays a critical role in rhythm generation, whereas delays imposed by post-translational modifications (PTMs) are important for determining the period (tau) of the rhythms (tau refers to the period of a rhythm and is the length, in time, of one complete cycle). A diurnal rhythm is synchronized with the day/night cycle, while the ultradian and infradian rhythms have a period shorter and longer than 24 hours, respectively. Disruptions in the circadian rhythms contribute to the pathology of cardiovascular diseases, cancer, metabolic syndromes and aging. A transcription/translation feedback loop (TTFL) forms the core of the molecular circadian clock mechanism. Transcription factors, CLOCK or NPAS2 and BMAL1 or BMAL2, form the positive limb of the feedback loop, act in the form of a heterodimer and activate the transcription of core clock genes and clock-controlled genes (involved in key metabolic processes), harboring E-box elements (5'-CACGTG-3') within their promoters. The core clock genes: PER1/2/3 and CRY1/2 which are transcriptional repressors form the negative limb of the feedback loop and interact with the CLOCK|NPAS2-BMAL1|BMAL2 heterodimer inhibiting its activity and thereby negatively regulating their own expression. This heterodimer also activates nuclear receptors NR1D1/2 and RORA/B/G, which form a second feedback loop and which activate and repress BMAL1 transcription, respectively. CRY1 and CRY2 have redundant functions but also differential and selective contributions at least in defining the pace of the SCN circadian clock and its circadian transcriptional outputs. Less potent transcriptional repressor in cerebellum and liver than CRY1, though less effective in lengthening the period of the SCN oscillator. Seems to play a critical role in tuning SCN circadian period by opposing the action of CRY1. With CRY1, dispensable for circadian rhythm generation but necessary for the development of intercellular networks for rhythm synchrony. May mediate circadian regulation of cAMP signaling and gluconeogenesis by blocking glucagon-mediated increases in intracellular cAMP concentrations and in CREB1 phosphorylation. Besides its role in the maintenance of the circadian clock, is also involved in the regulation of other processes. Plays a key role in glucose and lipid metabolism modulation, in part, through the transcriptional regulation of genes involved in these pathways, such as LEP or ACSL4. Represses glucocorticoid receptor NR3C1/GR-induced transcriptional activity by binding to glucocorticoid response elements (GREs). Represses the CLOCK-BMAL1 induced transcription of BHLHE40/DEC1 and NAMPT. Represses PPARD and its target genes in the skeletal muscle and limits exercise capacity. Represses the transcriptional activity of NR1I2. The chain is Cryptochrome-2 (Cry2) from Rattus norvegicus (Rat).